A 320-amino-acid chain; its full sequence is Probable arabinan endo-1,5-alpha-L-arabinosidase C (320 aa).

The first 16 residues, 1 to 16 (MYRSTLLFLFIALVNA), serve as a signal peptide directing secretion. The active-site Proton acceptor is aspartate 31. 3 N-linked (GlcNAc...) asparagine glycosylation sites follow: asparagine 73, asparagine 137, and asparagine 191. The Proton donor role is filled by glutamate 199.

Belongs to the glycosyl hydrolase 43 family.

Its subcellular location is the secreted. The enzyme catalyses Endohydrolysis of (1-&gt;5)-alpha-arabinofuranosidic linkages in (1-&gt;5)-arabinans.. Its pathway is glycan metabolism; L-arabinan degradation. Endo-1,5-alpha-L-arabinanase involved in degradation of pectin. Its preferred substrate is linear 1,5-alpha-L-arabinan. The polypeptide is Probable arabinan endo-1,5-alpha-L-arabinosidase C (abnC) (Aspergillus terreus (strain NIH 2624 / FGSC A1156)).